The following is a 101-amino-acid chain: Large ribosomal subunit protein uL24 (101 aa).

It belongs to the universal ribosomal protein uL24 family. As to quaternary structure, part of the 50S ribosomal subunit.

Its function is as follows. One of two assembly initiator proteins, it binds directly to the 5'-end of the 23S rRNA, where it nucleates assembly of the 50S subunit. One of the proteins that surrounds the polypeptide exit tunnel on the outside of the subunit. This chain is Large ribosomal subunit protein uL24, found in Borrelia turicatae (strain 91E135).